Reading from the N-terminus, the 444-residue chain is N-succinylarginine dihydrolase (444 aa).

Substrate contacts are provided by residues 19–28 (SGLSVGNIAS), N110, and 137–138 (HR). E174 is a catalytic residue. Position 214 (R214) interacts with substrate. The active site involves H250. 2 residues coordinate substrate: D252 and N362. The active-site Nucleophile is the C368.

This sequence belongs to the succinylarginine dihydrolase family. As to quaternary structure, homodimer.

It catalyses the reaction N(2)-succinyl-L-arginine + 2 H2O + 2 H(+) = N(2)-succinyl-L-ornithine + 2 NH4(+) + CO2. The protein operates within amino-acid degradation; L-arginine degradation via AST pathway; L-glutamate and succinate from L-arginine: step 2/5. Its function is as follows. Catalyzes the hydrolysis of N(2)-succinylarginine into N(2)-succinylornithine, ammonia and CO(2). The chain is N-succinylarginine dihydrolase from Aliivibrio fischeri (strain ATCC 700601 / ES114) (Vibrio fischeri).